We begin with the raw amino-acid sequence, 322 residues long: PIH1 domain-containing protein 2 (322 aa).

It belongs to the PIH1 family.

The sequence is that of PIH1 domain-containing protein 2 (pih1d2) from Danio rerio (Zebrafish).